The chain runs to 399 residues: Protein DDI1 homolog 2 (399 aa).

The Ubiquitin-like domain occupies 1–81 (MLLTVYCVRR…VILRQKENAD (81 aa)). A disordered region spans residues 99–134 (IAVPGTSNPQQRQLPRTQAQHSSPGEMASSPQGLDN). Polar residues predominate over residues 103–131 (GTSNPQQRQLPRTQAQHSSPGEMASSPQG). Threonine 104 carries the phosphothreonine modification. Phosphoserine is present on residues serine 121, serine 128, serine 150, and serine 194. Residue aspartate 252 is part of the active site. Residues 376 to 395 (EEIADQELAEAIQKSAEDAE) carry the Ubiquitin-binding motif.

The protein belongs to the DDI1 family. In terms of assembly, homodimer.

Its subcellular location is the cytoplasm. It is found in the cytosol. The protein localises to the chromosome. In terms of biological role, aspartic protease that mediates the cleavage of NFE2L1/NRF1 at 'Leu-104', thereby promoting release of NFE2L1/NRF1 from the endoplasmic reticulum membrane. Ubiquitination of NFE2L1/NRF1 is a prerequisite for cleavage, suggesting that DDI2 specifically recognizes and binds ubiquitinated NFE2L1/NRF1. Seems to act as a proteasomal shuttle which links the proteasome and replication fork proteins like RTF2. Required, with DDI1, for cellular survival following replication stress. Together or redudantly with DDI1, removes RTF2 from stalled forks to allow cell cycle progression after replication stress and maintains genome integrity. This Mus musculus (Mouse) protein is Protein DDI1 homolog 2.